A 309-amino-acid polypeptide reads, in one-letter code: Olfactory receptor 1A1 (309 aa).

Topologically, residues 1–25 (MRENNQSSTLEFILLGVTGQQEQED) are extracellular. A glycan (N-linked (GlcNAc...) asparagine) is linked at N5. The helical transmembrane segment at 26 to 49 (FFYILFLFIYPITLIGNLLIVLAI) threads the bilayer. Topologically, residues 50–57 (CSDVHLHN) are cytoplasmic. Residues 58 to 79 (PMYFLLANLSLVDIFFSSVTIP) form a helical membrane-spanning segment. Residues 80–100 (KMLANHLSGSKSISFGGCLTQ) lie on the Extracellular side of the membrane. A disulfide bridge links C97 with C189. Residues 101–120 (MYFMIDLGNTDSYTLAAMAY) traverse the membrane as a helical segment. The Cytoplasmic segment spans residues 121 to 139 (DRAVAISRPLHYTTIMSPR). Residues 140 to 158 (SCIWLIAGSWVIGNANALP) form a helical membrane-spanning segment. Residues 159-195 (HTLLTASLSFCGNQEVANFYCDITPLLKLSCSDIHFH) lie on the Extracellular side of the membrane. The helical transmembrane segment at 196-218 (VKMMYLGVGIFSVPLLCIIVSYI) threads the bilayer. Residues 219–235 (RVFSTVFQVPSTKGVLK) lie on the Cytoplasmic side of the membrane. A helical membrane pass occupies residues 236-258 (AFSTCGSHLTVVSLYYGTVMGMY). At 259–270 (FRPLTNYSLKDA) the chain is on the extracellular side. N-linked (GlcNAc...) asparagine glycosylation is present at N264. A helical membrane pass occupies residues 271–290 (VITVMCTAVTPMLNPFIYSL). Over 291–309 (RNRDMKAALQKLFNKRISS) the chain is Cytoplasmic.

This sequence belongs to the G-protein coupled receptor 1 family.

The protein localises to the cell membrane. In terms of biological role, odorant receptor. This is Olfactory receptor 1A1 (OR1A1) from Gorilla gorilla gorilla (Western lowland gorilla).